Consider the following 215-residue polypeptide: Probable transaldolase (215 aa).

The active-site Schiff-base intermediate with substrate is the K83.

It belongs to the transaldolase family. Type 3B subfamily.

It localises to the cytoplasm. The catalysed reaction is D-sedoheptulose 7-phosphate + D-glyceraldehyde 3-phosphate = D-erythrose 4-phosphate + beta-D-fructose 6-phosphate. It participates in carbohydrate degradation; pentose phosphate pathway; D-glyceraldehyde 3-phosphate and beta-D-fructose 6-phosphate from D-ribose 5-phosphate and D-xylulose 5-phosphate (non-oxidative stage): step 2/3. In terms of biological role, transaldolase is important for the balance of metabolites in the pentose-phosphate pathway. This chain is Probable transaldolase, found in Methanococcus maripaludis (strain C6 / ATCC BAA-1332).